The primary structure comprises 100 residues: Small ribosomal subunit protein bS20 (100 aa).

Residues 1–20 (MASGKPKKKNPRLASGRKRV) show a composition bias toward basic residues. The segment at 1-21 (MASGKPKKKNPRLASGRKRVR) is disordered.

This sequence belongs to the bacterial ribosomal protein bS20 family.

Its function is as follows. Binds directly to 16S ribosomal RNA. The sequence is that of Small ribosomal subunit protein bS20 from Albidiferax ferrireducens (strain ATCC BAA-621 / DSM 15236 / T118) (Rhodoferax ferrireducens).